We begin with the raw amino-acid sequence, 283 residues long: Spore coat polysaccharide biosynthesis protein SpsK (283 aa).

This sequence belongs to the dTDP-4-dehydrorhamnose reductase family.

Its pathway is spore coat biogenesis; spore coat polysaccharide biosynthesis. This is Spore coat polysaccharide biosynthesis protein SpsK (spsK) from Bacillus subtilis (strain 168).